A 1515-amino-acid polypeptide reads, in one-letter code: Lysophospholipase nte1 (1515 aa).

At 1-59 the chain is on the cytoplasmic side; that stretch reads MESLSNLGNAMSSVLSETTSTTATAILADPTEALSSVVALASDAVSKATSDVVPEHTPT. The chain crosses the membrane as a helical span at residues 60–80; it reads SWFTIILWLLHRISSVLYFVI. Residues 81–102 lie on the Lumenal side of the membrane; it reads KLTTITTPTFLFNIFSTSLTVT. Residues 103–123 traverse the membrane as a helical segment; it reads MNATTLVLIMLFMMAGVTWVV. Residues 124-1515 are Cytoplasmic-facing; the sequence is RYRYLNMYSR…RTMAPRRASI (1392 aa). Disordered stretches follow at residues 278–303, 519–580, and 617–639; these read MHDT…GYPM, VTAT…TPRN, and VNPD…SRGG. Polar residues-rich tracts occupy residues 543 to 554 and 566 to 579; these read LTNTQQLKSGPA and PRPQ…STPR. Residues 670–789 and 835–955 contribute to the a nucleoside 3',5'-cyclic phosphate site; these read SPVP…LAGY and RLTE…IAAR. Residues 1212–1376 enclose the PNPLA domain; that stretch reads LVLGGGGARG…IDNLTVSRMK (165 aa). The GXGXXG signature appears at 1216–1221; that stretch reads GGGARG. A GXSXG motif is present at residues 1243 to 1247; sequence GTSIG. Ser1245 functions as the Nucleophile in the catalytic mechanism. Asp1363 (proton acceptor) is an active-site residue. The short motif at 1363–1365 is the DGA/G element; sequence DGG.

It belongs to the NTE family.

The protein resides in the endoplasmic reticulum membrane. It carries out the reaction a 1-acyl-sn-glycero-3-phosphocholine + H2O = sn-glycerol 3-phosphocholine + a fatty acid + H(+). With respect to regulation, inhibited by organophosphorus esters. Intracellular phospholipase B that catalyzes the double deacylation of phosphatidylcholine (PC) to glycerophosphocholine (GroPCho). Plays an important role in membrane lipid homeostasis. Responsible for the rapid PC turnover in response to inositol, elevated temperatures, or when choline is present in the growth medium. The chain is Lysophospholipase nte1 (nte1) from Neurospora crassa (strain ATCC 24698 / 74-OR23-1A / CBS 708.71 / DSM 1257 / FGSC 987).